We begin with the raw amino-acid sequence, 447 residues long: MTAHEVNFDGLVGLTHHYAGLSFGNEASTRHRFQVSNPRLAVKQGLLKMKALADAGFPQAVIPPHERPFIPALRQLGFTGSDEQILDKVARQAPRWLSSVSSASPMWVANAATVCPSADALDGKVHLTVANLNNKFHRALEAPVTEALLRAIFRDESQFSVHSALPQVALLGDEGAANHNRLGGEYGSAGVQLFVYGREEENEIRPARYPARQSREASEAVARLNQVNPQQVIFAQQNPEVIDQGVFHNDVIAVSNRQVLFCHEAAFARQKVLINQLRTRVDGFMAIEVPAGEVSVSDAVATYLFNSQLLSRDDGSMLLVLPRECQDHVGVWRYLNKLVAEDNPISAMQVFDLRESMANGGGPACLRLRVVLTEEERRAVNPAVMMNDALFTALNAWADRYYRDRLTAADLADPLLLREGREALDVLTRLLDLGSVYPFQQTGAADG.

Substrate contacts are provided by residues Ala-19–Ser-28, Asn-110, and His-137–Arg-138. Glu-174 is a catalytic residue. Arg-212 contributes to the substrate binding site. Residue His-248 is part of the active site. Substrate-binding residues include Asp-250 and Asn-359. Catalysis depends on Cys-365, which acts as the Nucleophile.

The protein belongs to the succinylarginine dihydrolase family. Homodimer.

It catalyses the reaction N(2)-succinyl-L-arginine + 2 H2O + 2 H(+) = N(2)-succinyl-L-ornithine + 2 NH4(+) + CO2. It functions in the pathway amino-acid degradation; L-arginine degradation via AST pathway; L-glutamate and succinate from L-arginine: step 2/5. In terms of biological role, catalyzes the hydrolysis of N(2)-succinylarginine into N(2)-succinylornithine, ammonia and CO(2). This is N-succinylarginine dihydrolase from Salmonella agona (strain SL483).